The sequence spans 62 residues: MTTNRVDPLEQTSPNTPTSKREKAKIYGKKLVDSAKIGAKTLSNAYKVTIGTIEVVGPGSDF.

Residues Met-1 to Thr-18 show a composition bias toward polar residues. Residues Met-1–Ala-24 are disordered.

This is an uncharacterized protein from Rickettsia conorii (strain ATCC VR-613 / Malish 7).